A 111-amino-acid chain; its full sequence is Large ribosomal subunit protein eL33z (111 aa).

The protein belongs to the eukaryotic ribosomal protein eL33 family.

This Arabidopsis thaliana (Mouse-ear cress) protein is Large ribosomal subunit protein eL33z (RPL35AB).